The following is a 394-amino-acid chain: DNA replication and repair protein RecF (394 aa).

Residue Gly30–Thr37 participates in ATP binding.

It belongs to the RecF family.

Its subcellular location is the cytoplasm. The RecF protein is involved in DNA metabolism; it is required for DNA replication and normal SOS inducibility. RecF binds preferentially to single-stranded, linear DNA. It also seems to bind ATP. This chain is DNA replication and repair protein RecF, found in Roseiflexus castenholzii (strain DSM 13941 / HLO8).